The sequence spans 80 residues: Exodeoxyribonuclease 7 small subunit (80 aa).

It belongs to the XseB family. Heterooligomer composed of large and small subunits.

The protein localises to the cytoplasm. The enzyme catalyses Exonucleolytic cleavage in either 5'- to 3'- or 3'- to 5'-direction to yield nucleoside 5'-phosphates.. In terms of biological role, bidirectionally degrades single-stranded DNA into large acid-insoluble oligonucleotides, which are then degraded further into small acid-soluble oligonucleotides. The polypeptide is Exodeoxyribonuclease 7 small subunit (Pseudomonas fluorescens (strain SBW25)).